The chain runs to 183 residues: Macro domain-containing protein (183 aa).

The Macro domain occupies 1 to 174; sequence MKKVHLIQAD…IYKNILSNID (174 aa).

This sequence belongs to the MacroD-type family.

In Acinetobacter sp. (strain ED45-25), this protein is Macro domain-containing protein.